The sequence spans 270 residues: Phthiotriol/phenolphthiotriol dimycocerosates methyltransferase (270 aa).

The protein belongs to the methyltransferase superfamily. Phthiotriol/phenolphthiotriol dimycocerosates methyltransferase family.

Functionally, catalyzes the methylation of the lipid moiety of the intermediate compounds phthiotriol and glycosylated phenolphthiotriol dimycoserosates to form phthiocerol dimycocerosates (DIM A) and glycosylated phenolphthiocerol dimycocerosates (PGL). The protein is Phthiotriol/phenolphthiotriol dimycocerosates methyltransferase of Mycobacterium leprae (strain TN).